We begin with the raw amino-acid sequence, 342 residues long: Isopentenyl-diphosphate delta-isomerase (342 aa).

11 to 12 (RK) lines the substrate pocket. FMN is bound by residues Ser-68, 69-71 (SMT), Ser-99, and Asn-128. 99–101 (SQR) serves as a coordination point for substrate. Position 162 (Gln-162) interacts with substrate. Glu-163 lines the Mg(2+) pocket. Residues Lys-194, Ser-219, Thr-224, 275-277 (GVR), and 296-297 (AK) contribute to the FMN site.

It belongs to the IPP isomerase type 2 family. As to quaternary structure, homooctamer. Dimer of tetramers. It depends on FMN as a cofactor. NADPH serves as cofactor. Requires Mg(2+) as cofactor.

It is found in the cytoplasm. The catalysed reaction is isopentenyl diphosphate = dimethylallyl diphosphate. In terms of biological role, involved in the biosynthesis of isoprenoids. Catalyzes the 1,3-allylic rearrangement of the homoallylic substrate isopentenyl (IPP) to its allylic isomer, dimethylallyl diphosphate (DMAPP). The polypeptide is Isopentenyl-diphosphate delta-isomerase (Legionella pneumophila (strain Lens)).